The chain runs to 427 residues: 3-phosphoshikimate 1-carboxyvinyltransferase (427 aa).

3-phosphoshikimate is bound by residues K22, S23, and R27. K22 contacts phosphoenolpyruvate. The phosphoenolpyruvate site is built by G96 and R124. S170, S171, Q172, S198, D314, N337, and K341 together coordinate 3-phosphoshikimate. Q172 provides a ligand contact to phosphoenolpyruvate. D314 (proton acceptor) is an active-site residue. Phosphoenolpyruvate is bound by residues R345, R387, and K412.

The protein belongs to the EPSP synthase family. In terms of assembly, monomer.

It localises to the cytoplasm. The catalysed reaction is 3-phosphoshikimate + phosphoenolpyruvate = 5-O-(1-carboxyvinyl)-3-phosphoshikimate + phosphate. It functions in the pathway metabolic intermediate biosynthesis; chorismate biosynthesis; chorismate from D-erythrose 4-phosphate and phosphoenolpyruvate: step 6/7. Catalyzes the transfer of the enolpyruvyl moiety of phosphoenolpyruvate (PEP) to the 5-hydroxyl of shikimate-3-phosphate (S3P) to produce enolpyruvyl shikimate-3-phosphate and inorganic phosphate. This is 3-phosphoshikimate 1-carboxyvinyltransferase from Tolumonas auensis (strain DSM 9187 / NBRC 110442 / TA 4).